The primary structure comprises 350 residues: MLPSLQSLTKKVLAGQCVPTNQHYLLKCYDLWWHDGPITFDHNLKLIKSAGIKEGLDLNTALVKAVRENNYNLIKLFAEWGANINYGLVSVNTEHTRDLCRELGAKETLNEEEILQIFIDLKFHKTSSNIILCHEVFSNNPILQKVNNIKMRIEIFWELRELIEKTDLLNNEFSLSALLLKYWYAIAIRYNLKEAIQYFYQKYTHLNTWRLTCALCFNNVFDLHEAYEKDKIHMDIEEMMRIACIKDHNLSTMYYCYVLGANINQAMLTSIQYYNIENMFFCMDLGADAFEEGTIALGEGYKLIKNILSLKIYSPATTPLPKSTDPEIIDHALKNYVSKNMMIFLTYDLR.

An ANK repeat occupies Asp57–Val89.

This sequence belongs to the asfivirus MGF 360 family.

In terms of biological role, plays a role in virus cell tropism, and may be required for efficient virus replication in macrophages. This African swine fever virus (isolate Warthog/Namibia/Wart80/1980) (ASFV) protein is Protein MGF 360-12L.